The following is a 301-amino-acid chain: Ribosomal RNA small subunit methyltransferase H (301 aa).

Residues 31–33 (GGY), Asp-49, Phe-76, Asp-97, and Gln-104 contribute to the S-adenosyl-L-methionine site.

It belongs to the methyltransferase superfamily. RsmH family.

It is found in the cytoplasm. The catalysed reaction is cytidine(1402) in 16S rRNA + S-adenosyl-L-methionine = N(4)-methylcytidine(1402) in 16S rRNA + S-adenosyl-L-homocysteine + H(+). In terms of biological role, specifically methylates the N4 position of cytidine in position 1402 (C1402) of 16S rRNA. This chain is Ribosomal RNA small subunit methyltransferase H, found in Ehrlichia ruminantium (strain Welgevonden).